Reading from the N-terminus, the 83-residue chain is Small ribosomal subunit protein bS16 (83 aa).

The protein belongs to the bacterial ribosomal protein bS16 family.

This Shewanella baltica (strain OS223) protein is Small ribosomal subunit protein bS16.